A 129-amino-acid polypeptide reads, in one-letter code: Histone H3 (129 aa).

Positions 1 to 36 (MSRTKETARAKRTITSKKSKKAPSGASGVKRSHRRW) are disordered. Basic residues predominate over residues 10-21 (AKRTITSKKSKK).

Belongs to the histone H3 family. In terms of assembly, the nucleosome is a histone octamer containing two molecules each of H2A, H2B, H3 and H4 assembled in one H3-H4 heterotetramer and two H2A-H2B heterodimers. The octamer wraps approximately 147 bp of DNA.

The protein localises to the nucleus. The protein resides in the chromosome. Its function is as follows. Core component of nucleosome. Nucleosomes wrap and compact DNA into chromatin, limiting DNA accessibility to the cellular machineries which require DNA as a template. Histones thereby play a central role in transcription regulation, DNA repair, DNA replication and chromosomal stability. DNA accessibility is regulated via a complex set of post-translational modifications of histones, also called histone code, and nucleosome remodeling. In Leishmania infantum, this protein is Histone H3.